A 414-amino-acid chain; its full sequence is Enolase (414 aa).

Gln-156 provides a ligand contact to (2R)-2-phosphoglycerate. Glu-200 acts as the Proton donor in catalysis. Mg(2+)-binding residues include Asp-236, Glu-281, and Asp-308. Residues Lys-333, Arg-362, Ser-363, and Lys-384 each coordinate (2R)-2-phosphoglycerate. Lys-333 (proton acceptor) is an active-site residue.

It belongs to the enolase family. It depends on Mg(2+) as a cofactor.

The protein resides in the cytoplasm. It localises to the secreted. It is found in the cell surface. It carries out the reaction (2R)-2-phosphoglycerate = phosphoenolpyruvate + H2O. It participates in carbohydrate degradation; glycolysis; pyruvate from D-glyceraldehyde 3-phosphate: step 4/5. Functionally, catalyzes the reversible conversion of 2-phosphoglycerate (2-PG) into phosphoenolpyruvate (PEP). It is essential for the degradation of carbohydrates via glycolysis. The sequence is that of Enolase from Methanosphaera stadtmanae (strain ATCC 43021 / DSM 3091 / JCM 11832 / MCB-3).